The following is a 31-amino-acid chain: Photosystem II reaction center protein T (31 aa).

Residues serine 3–phenylalanine 23 traverse the membrane as a helical segment.

It belongs to the PsbT family. PSII is composed of 1 copy each of membrane proteins PsbA, PsbB, PsbC, PsbD, PsbE, PsbF, PsbH, PsbI, PsbJ, PsbK, PsbL, PsbM, PsbT, PsbX, PsbY, PsbZ, Psb30/Ycf12, peripheral proteins PsbO, CyanoQ (PsbQ), PsbU, PsbV and a large number of cofactors. It forms dimeric complexes.

It localises to the cellular thylakoid membrane. In terms of biological role, found at the monomer-monomer interface of the photosystem II (PS II) dimer, plays a role in assembly and dimerization of PSII. PSII is a light-driven water plastoquinone oxidoreductase, using light energy to abstract electrons from H(2)O, generating a proton gradient subsequently used for ATP formation. The protein is Photosystem II reaction center protein T of Synechococcus sp. (strain CC9311).